The following is a 233-amino-acid chain: Octanoyltransferase (233 aa).

One can recognise a BPL/LPL catalytic domain in the interval Asp-36–Thr-211. Residues Arg-75 to His-82, Ser-142 to Gly-144, and Gly-155 to Ala-157 each bind substrate. Cys-173 acts as the Acyl-thioester intermediate in catalysis.

Belongs to the LipB family.

Its subcellular location is the cytoplasm. The catalysed reaction is octanoyl-[ACP] + L-lysyl-[protein] = N(6)-octanoyl-L-lysyl-[protein] + holo-[ACP] + H(+). It functions in the pathway protein modification; protein lipoylation via endogenous pathway; protein N(6)-(lipoyl)lysine from octanoyl-[acyl-carrier-protein]: step 1/2. Catalyzes the transfer of endogenously produced octanoic acid from octanoyl-acyl-carrier-protein onto the lipoyl domains of lipoate-dependent enzymes. Lipoyl-ACP can also act as a substrate although octanoyl-ACP is likely to be the physiological substrate. In Yersinia pseudotuberculosis serotype O:1b (strain IP 31758), this protein is Octanoyltransferase.